The sequence spans 1350 residues: Zinc finger protein Xfin (1350 aa).

A KRAB domain is found at 1–58; the sequence is MEEPKCLQREMYKSVMTENYQCVLSLGYPIRKPEIVSMMEVGEELWSKNDSARPGQKE. Residues 47-68 form a disordered region; that stretch reads SKNDSARPGQKEVEGETPKESD. 37 consecutive C2H2-type zinc fingers follow at residues 108 to 130, 136 to 158, 164 to 186, 192 to 214, 220 to 242, 248 to 270, 276 to 298, 326 to 348, 354 to 376, 382 to 404, 410 to 432, 438 to 460, 466 to 488, 503 to 525, 531 to 553, 559 to 581, 587 to 609, 615 to 637, 643 to 665, 671 to 693, 699 to 721, 750 to 772, 778 to 800, 806 to 828, 834 to 856, 862 to 884, 890 to 912, 918 to 940, 988 to 1010, 1016 to 1038, 1044 to 1066, 1136 to 1158, 1164 to 1186, 1192 to 1214, 1220 to 1242, 1248 to 1270, and 1276 to 1298; these read HICS…QRMH, HHCP…QRTH, YQCV…QRTH, YTCL…RRTH, YRCS…LRTH, YECP…KRTH, FRCS…MRKH, YSCS…QQTH, YLCS…FRTH, YQCA…LRTH, FKCS…QRTH, YKCS…QRIH, YKCT…QKVH, HKCS…SKLH, FQCA…IRVH, FKCL…WRIH, FPCY…HRTH, HKCS…SRTH, YPCT…QRIH, YHCT…RRTH, YRCP…LVVH, YPCT…LRTH, YPCN…LRTH, YHCP…QRTH, YTCS…MRTH, YKCE…QRIH, YHCP…QRIH, YPCG…LKCH, FKCN…VRIH, YKCS…YRTH, YKCG…QRVH, YSCS…WRMH, YTCK…VRIH, YPCS…QRIH, YTCT…SRTH, YKCN…MRTH, and YGCN…QRMC.

It belongs to the krueppel C2H2-type zinc-finger protein family. Post-translationally, phosphorylated. Phosphorylation enhances RNA binding. Expressed in oocytes, and in specialized cell types such as neural retina cones in adults.

Its subcellular location is the cytoplasm. Its function is as follows. Binds to poly-G sequences in RNA. May function in post-translational regulation processes. In Xenopus laevis (African clawed frog), this protein is Zinc finger protein Xfin.